A 215-amino-acid polypeptide reads, in one-letter code: Pyrrolidone-carboxylate peptidase (215 aa).

Residues E80, C143, and H167 contribute to the active site.

This sequence belongs to the peptidase C15 family. As to quaternary structure, homotetramer.

Its subcellular location is the cytoplasm. It carries out the reaction Release of an N-terminal pyroglutamyl group from a polypeptide, the second amino acid generally not being Pro.. In terms of biological role, removes 5-oxoproline from various penultimate amino acid residues except L-proline. The protein is Pyrrolidone-carboxylate peptidase of Bacillus thuringiensis (strain Al Hakam).